The chain runs to 269 residues: Ethylene-responsive transcription factor ERN1 (269 aa).

A compositionally biased stretch (polar residues) spans 1–15 (MEIQFQQPNLQQHQK). Disordered regions lie at residues 1–36 (MEIQFQQPNLQQHQKAGTKGGKFKGRNRNSNTNKFV) and 128–157 (DVPAPSASTTSTSSNTSNSDKNDHNSLSSG). The AP2/ERF DNA-binding region spans 34 to 91 (KFVGVRQRPSGRWVAEIKDTTQKIRMWLGTFETAEEAARAYDEAACLLRGSNTRTNFI). Over residues 128-146 (DVPAPSASTTSTSSNTSNS) the composition is skewed to low complexity.

It belongs to the AP2/ERF transcription factor family. ERF subfamily.

The protein resides in the nucleus. Functionally, transcription factor involved in the symbiotic nodule signaling pathway in response to rhizobial stimulation. Functions as a transcriptional regulator required for root infection by symbiotic rhizobia, infection thread (IT) formation, and nodule development. May coordinate these processes. Functions downstream of the CCAMK-CYCLOPS complex. Probably not involved in arbuscular mycorrhizal (AM) symbiosis. The sequence is that of Ethylene-responsive transcription factor ERN1 from Lotus japonicus (Lotus corniculatus var. japonicus).